Here is a 353-residue protein sequence, read N- to C-terminus: Photosystem II protein D1 (353 aa).

Threonine 2 carries the post-translational modification N-acetylthreonine. The residue at position 2 (threonine 2) is a Phosphothreonine. Helical transmembrane passes span 29-46 (YVGWFGVIMIPTLLTAVS), 118-133 (HFFLGICCYMGREWEL), and 142-156 (WIAVAYSAPVAAATA). Histidine 118 contributes to the chlorophyll a binding site. Tyrosine 126 is a binding site for pheophytin a. Residues aspartate 170 and glutamate 189 each coordinate [CaMn4O5] cluster. The helical transmembrane segment at 197 to 218 (FHMLGVAGVFGGSLFSAMHGSL) threads the bilayer. Residue histidine 198 participates in chlorophyll a binding. Residues histidine 215 and 264-265 (SF) each bind a quinone. Residue histidine 215 participates in Fe cation binding. Residue histidine 272 participates in Fe cation binding. Residues 274-288 (FLAAWPVVGIWFTAL) traverse the membrane as a helical segment. [CaMn4O5] cluster is bound by residues histidine 332, glutamate 333, aspartate 342, and alanine 344. A propeptide spanning residues 345–353 (SVEAPSING) is cleaved from the precursor.

This sequence belongs to the reaction center PufL/M/PsbA/D family. In terms of assembly, PSII is composed of 1 copy each of membrane proteins PsbA, PsbB, PsbC, PsbD, PsbE, PsbF, PsbH, PsbI, PsbJ, PsbK, PsbL, PsbM, PsbT, PsbX, PsbY, PsbZ, Psb30/Ycf12, at least 3 peripheral proteins of the oxygen-evolving complex and a large number of cofactors. It forms dimeric complexes. The cofactor is The D1/D2 heterodimer binds P680, chlorophylls that are the primary electron donor of PSII, and subsequent electron acceptors. It shares a non-heme iron and each subunit binds pheophytin, quinone, additional chlorophylls, carotenoids and lipids. D1 provides most of the ligands for the Mn4-Ca-O5 cluster of the oxygen-evolving complex (OEC). There is also a Cl(-1) ion associated with D1 and D2, which is required for oxygen evolution. The PSII complex binds additional chlorophylls, carotenoids and specific lipids.. In terms of processing, tyr-161 forms a radical intermediate that is referred to as redox-active TyrZ, YZ or Y-Z. C-terminally processed by CTPA; processing is essential to allow assembly of the oxygen-evolving complex and thus photosynthetic growth.

The protein resides in the plastid. The protein localises to the chloroplast thylakoid membrane. The enzyme catalyses 2 a plastoquinone + 4 hnu + 2 H2O = 2 a plastoquinol + O2. Functionally, photosystem II (PSII) is a light-driven water:plastoquinone oxidoreductase that uses light energy to abstract electrons from H(2)O, generating O(2) and a proton gradient subsequently used for ATP formation. It consists of a core antenna complex that captures photons, and an electron transfer chain that converts photonic excitation into a charge separation. The D1/D2 (PsbA/PsbD) reaction center heterodimer binds P680, the primary electron donor of PSII as well as several subsequent electron acceptors. The polypeptide is Photosystem II protein D1 (Tupiella akineta (Green alga)).